The following is a 261-amino-acid chain: MKVGVFDSGLGGLTVLKSILKVLKNAEIFYIADTAYAPYGEKDSALILKRCEDITNYLLKEYKIDALIVACNTATSAAIKHLRDNFSSLIVIGTEPGIKPAILNTKSSNIGILATPSTLKSDKYQLLVNELSSIKKVNLFEQACPGLAMQIEKGEINTLTTYKMLEEWLIPMKEANVDTIVLGCTHYPLISQTIKKIMGEDITLIQTGDAIAKRLLSLSEEKGHKNIGDLKVTVLHTGLINLDMIENILENKNIEVRKCEI.

Substrate is bound by residues 7–8 (DS) and 39–40 (YG). Cys-71 (proton donor/acceptor) is an active-site residue. 72–73 (NT) contributes to the substrate binding site. Cys-184 functions as the Proton donor/acceptor in the catalytic mechanism. A substrate-binding site is contributed by 185-186 (TH).

The protein belongs to the aspartate/glutamate racemases family.

The enzyme catalyses L-glutamate = D-glutamate. Its pathway is cell wall biogenesis; peptidoglycan biosynthesis. Its function is as follows. Provides the (R)-glutamate required for cell wall biosynthesis. This chain is Glutamate racemase, found in Aliarcobacter butzleri (strain RM4018) (Arcobacter butzleri).